Consider the following 50-residue polypeptide: Omwaprin-a (50 aa).

The region spanning 3–47 (RPKKPGLCPPRPQKPCVKECKNDDSCPGQQKCCNYGCKDECRDPI) is the WAP domain. 4 cysteine pairs are disulfide-bonded: cysteine 10–cysteine 35, cysteine 18–cysteine 39, cysteine 22–cysteine 34, and cysteine 28–cysteine 43.

This sequence belongs to the venom waprin family. Expressed by the venom gland.

It localises to the secreted. Functionally, damages membranes of susceptible bacteria. Has antibacterial activity against the Gram-positive bacteria B.megaterium and S.warneri. After a 45-minute treatment with this protein, B.megaterium have no visible pili and are smooth. Has no antibacterial activity against the Gram-positive bacteria B.thuringiensis, S.aureus, S.clavuligerus and B.anthracis, or the Gram-negative bacteria E.coli and A.tumefaciens. Has no hemolytic activity. Does not inhibit the proteinases elastase and cathepsin G. Is not toxic to mice. This is Omwaprin-a from Oxyuranus microlepidotus (Inland taipan).